Consider the following 104-residue polypeptide: Replication restart protein PriB (104 aa).

One can recognise an SSB domain in the interval 1–101 (MTNRLVLSGT…LHAEQIDLID (101 aa)).

This sequence belongs to the PriB family. In terms of assembly, homodimer. Interacts with PriA and DnaT. Component of the replication restart primosome. Primosome assembly occurs via a 'hand-off' mechanism. PriA binds to replication forks, subsequently PriB then DnaT bind; DnaT then displaces ssDNA to generate the helicase loading substrate.

In terms of biological role, involved in the restart of stalled replication forks, which reloads the replicative helicase on sites other than the origin of replication; the PriA-PriB pathway is the major replication restart pathway. During primosome assembly it facilitates complex formation between PriA and DnaT on DNA; stabilizes PriA on DNA. Stimulates the DNA unwinding activity of PriA helicase. The sequence is that of Replication restart protein PriB from Enterobacter sp. (strain 638).